A 411-amino-acid chain; its full sequence is NADH-quinone oxidoreductase subunit D 2 (411 aa).

This sequence belongs to the complex I 49 kDa subunit family. NDH-1 is composed of 14 different subunits. Subunits NuoB, C, D, E, F, and G constitute the peripheral sector of the complex.

The protein localises to the cell membrane. The catalysed reaction is a quinone + NADH + 5 H(+)(in) = a quinol + NAD(+) + 4 H(+)(out). Functionally, NDH-1 shuttles electrons from NADH, via FMN and iron-sulfur (Fe-S) centers, to quinones in the respiratory chain. The immediate electron acceptor for the enzyme in this species is believed to be ubiquinone. Couples the redox reaction to proton translocation (for every two electrons transferred, four hydrogen ions are translocated across the cytoplasmic membrane), and thus conserves the redox energy in a proton gradient. This is NADH-quinone oxidoreductase subunit D 2 from Chloroflexus aurantiacus (strain ATCC 29366 / DSM 635 / J-10-fl).